The sequence spans 385 residues: Probable peptidoglycan glycosyltransferase FtsW (385 aa).

A run of 9 helical transmembrane segments spans residues 18–38, 57–77, 81–101, 111–131, 157–177, 195–215, 280–300, 311–331, and 347–367; these read LLWTAILLALAGLVMVSSASL, IYLALGLGVGAFVYYAVPLAL, LRFVMLPVALVALVMVFIPGL, WIALPGLTIQASEIVKLCFVL, LLGVLMLLLLLEPDFGAVVVL, FLLIGLIAVALGGLVAFAEPY, LGLLGNVALIGGFILLGWRVF, LLYHAYLVYGCAFVFCSQAFI, and LPFISYGGSSLLISAVMVGLI.

This sequence belongs to the SEDS family. FtsW subfamily.

It is found in the cell inner membrane. It carries out the reaction [GlcNAc-(1-&gt;4)-Mur2Ac(oyl-L-Ala-gamma-D-Glu-L-Lys-D-Ala-D-Ala)](n)-di-trans,octa-cis-undecaprenyl diphosphate + beta-D-GlcNAc-(1-&gt;4)-Mur2Ac(oyl-L-Ala-gamma-D-Glu-L-Lys-D-Ala-D-Ala)-di-trans,octa-cis-undecaprenyl diphosphate = [GlcNAc-(1-&gt;4)-Mur2Ac(oyl-L-Ala-gamma-D-Glu-L-Lys-D-Ala-D-Ala)](n+1)-di-trans,octa-cis-undecaprenyl diphosphate + di-trans,octa-cis-undecaprenyl diphosphate + H(+). It functions in the pathway cell wall biogenesis; peptidoglycan biosynthesis. Its function is as follows. Peptidoglycan polymerase that is essential for cell division. This Alcanivorax borkumensis (strain ATCC 700651 / DSM 11573 / NCIMB 13689 / SK2) protein is Probable peptidoglycan glycosyltransferase FtsW.